Here is a 685-residue protein sequence, read N- to C-terminus: Probable cysteine desulfurase (685 aa).

The interval 1–282 (MTRSPCSTTS…RDEHEVFDVA (282 aa)) is cargo-loading domain. 2 disordered regions span residues 48–135 (SIRP…TSAG) and 162–185 (PTPA…VPDT). Positions 71-85 (ATAATSAGRTAAGTA) are enriched in low complexity. A compositionally biased stretch (pro residues) spans 102–121 (LPPPASPAPEAPPQAAPPAP). Low complexity predominate over residues 122–135 (RGSAPDATAATSAG). Pro residues predominate over residues 164–178 (PAGPEAPPQSAPPAP). Lys-502 bears the N6-(pyridoxal phosphate)lysine mark. The active-site Cysteine persulfide intermediate is the Cys-640.

It belongs to the class-V pyridoxal-phosphate-dependent aminotransferase family. Csd subfamily. Isolated from bacteria in a complex with encapsulin 2A (AC I3NID5), strongly suggesting it is found in a type 2A encapsulin nanocompartment. There are 1-2 copies of this protein in each encapsulin shell. Pyridoxal 5'-phosphate is required as a cofactor.

Its subcellular location is the encapsulin nanocompartment. The protein resides in the cell membrane. The catalysed reaction is (sulfur carrier)-H + L-cysteine = (sulfur carrier)-SH + L-alanine. Its function is as follows. Cargo protein of a type 2A encapsulin nanocompartment involved in sulfur metabolism. Cysteine desulfurases mobilize the sulfur from L-cysteine to yield L-alanine, an essential step in sulfur metabolism for biosynthesis of a variety of sulfur-containing biomolecules. The protein is Probable cysteine desulfurase of Mycolicibacterium paratuberculosis (strain ATCC BAA-968 / K-10) (Mycobacterium paratuberculosis).